Reading from the N-terminus, the 459-residue chain is Cyclooctatin synthase (459 aa).

Cys408 lines the heme pocket.

Belongs to the cytochrome P450 family. The cofactor is heme.

The catalysed reaction is cyclooctat-9-ene-5,7-diol + AH2 + O2 = cyclooctatin + A + H2O. In terms of biological role, involved in the biosynthesis of cyclooctatin, a potent inhibitor of lysophospholipase. Catalyzes the hydroxylation of cyclooctat-9-ene-5,7-diol at C-18 to yield the final product, cyclooctatin. The chain is Cyclooctatin synthase from Streptomyces melanosporofaciens.